We begin with the raw amino-acid sequence, 220 residues long: MTMNNQIQHKDSTKVPEPTLRRLPWYLSNVKLLKQKGERYVSSTQISKEINIDASQIAKDLSYVNISGRTRVGYEVDALIAVLEDFLGFTNMHKAFLFGVGSLGGALLRDSGLSHFGLEIVAAFDVNPSLVGTTLNGIPIFHSDDFQKKMQEYGVHIGVLTVPIEIAQCITDTMVAGGIKAVWNFTPFRIRVPEDIVVQNTSLYAHLAVMFNRLNFNEIE.

A DNA-binding region (H-T-H motif) is located at residues 25–64; the sequence is WYLSNVKLLKQKGERYVSSTQISKEINIDASQIAKDLSYV. NAD(+) is bound at residue 99-104; it reads GVGSLG.

This sequence belongs to the transcriptional regulatory Rex family. Homodimer.

The protein localises to the cytoplasm. In terms of biological role, modulates transcription in response to changes in cellular NADH/NAD(+) redox state. The chain is Redox-sensing transcriptional repressor Rex from Bacteroides fragilis (strain ATCC 25285 / DSM 2151 / CCUG 4856 / JCM 11019 / LMG 10263 / NCTC 9343 / Onslow / VPI 2553 / EN-2).